A 1509-amino-acid polypeptide reads, in one-letter code: MAAQRRRKGGEVESDYIKYLKYKNTGFQVSASDKTLAWWPTKDADRAFCHVEVTKDDGKNFTVRLENGEEKSQPKNEKNFLGVNPPKFDGVEDMGELGYLNEPAVLHNLKKRYDADLFHTYSGLFLVVVNPYKRLPVYTPEIIDIYRGRQRDKVAPHIFAISDAAYRAMLNTRQNQSMLITGESGAGKTENTKKVIQYLTAIAGRAEGGLLEQQLLEFNPILEAFGNAKTTKNNNSSRFGKFIELQFNAGGQITGANTFIYLLEKSRVTAQGAGERNFHIFYQILSKAMPEELKQKLKLTKPEDYFFLNQNACYTVDDMDDAKEFDHMLKAFDILNINEEERLAIFQTISAILHLGNLPFIDVNSETAGLKDEVELNIAAELLGVSAAGLKAGLLSPRIKAGNEWVTRALNKPKAMASRDALCKALFGRLFLWIVQKINRILSHKDKTALWIGVLDISGFEIFQHNSFEQLCINYTNEKLQQFFNHHMFTLEQQEYEREKIDWTFVDYGMDSQDCIDLIEKKPMGILPLLDEQTVFPDADDTSFTKKLFQTHENHRNFRRPRFDANNFKIVHYAGEVEYQTSAWLEKNRDPLEDDLSNLCKKSSVRFVTGLFDEDLMPSFKAAPAEEEKAAAGGSRNRSTGRGKGGAQFITVAFQYKEQLAHLMSMLSSTAPHFIRCIIPNLGKKPGVVSDQLVLDQLKCNGVLEGIRIARKGWPNRLKYDEFLKRYFLLKPGATPTSPSTKDAVKDLIEHLIAKEPTKVNKDEVRFGVTKIFFRSGQLAAIEELREQAISKMVVSIQAGARAFLARRMYDKMREQTVSAKILQRNIRAWLELKNWAWYQLYVKARPLISQRNFQKEIDDLKKQVKDLEKELAALKDANAKLDKEKQLAEEDADKLEKDLAALKLKILDLEGEKADLEEDNALLQKKVAGLEEELQEETSASNDILEQKRKLEAEKGELKASLEEEERNRKALQEAKTKVESERNELQDKYEDEAAAHDSLKKKEEDLSRELRETKDALADAENISETLRSKLKNTERGADDVRNELDDVTATKLQLEKTKKSLEEELAQTRAQLEEEKSGKEAASSKAKQLGQQLEDARSEVDSLKSKLSAAEKSLKTAKDQNRDLDEQLEDERTVRANVDKQKKALEAKLTELEDQVTALDGQKNAAAAQAKTLKTQVDETKRRLEEAEASAARLEKERKNALDEVAQLTADLDAERDSGAQQRRKLNTRISELQSELENAPKTGGASSEEVKRLEGELERLEEELLTAQEARAAAEKNLDKANLELEELRQEADDAARDNDKLVKDNRKLKADLDEARIQLEEEQDAKSHADSSSRRLLAEIEELKKRVAKETSDKQKAQDQKANYQRENESLKADRDSIERRNRDAERQVRDLRAQLDDALSRLDSEKRAKEKSVEANRELKKVVLDRERQSLESLSKFNSALESDKQILEDEIGDLHEKNKQLQAKIAQLQDEIDGTPSSRGGSTRGASARGASVRAGSARAEE.

One can recognise a Myosin N-terminal SH3-like domain in the interval serine 32–proline 85. The 699-residue stretch at aspartate 89–glutamate 787 folds into the Myosin motor domain. Lysine 133 is modified (N6,N6,N6-trimethyllysine). Residue glycine 182–threonine 189 participates in ATP binding. Residues alanine 623–glycine 643 form a disordered region. 2 actin-binding regions span residues leucine 660–leucine 682 and arginine 766–alanine 780. The IQ domain occupies isoleucine 790–serine 819. Positions leucine 848–arginine 1226 are alpha-helical tailpiece (S2). Residues leucine 848–glutamate 1509 are a coiled coil. Basic and acidic residues-rich tracts occupy residues glutamate 958–leucine 1019, lysine 1034–leucine 1047, glutamate 1097–lysine 1107, lysine 1115–valine 1141, and glutamine 1179–glutamate 1189. Disordered stretches follow at residues glutamate 958 to aspartate 1049, leucine 1068 to valine 1141, alanine 1170 to alanine 1195, alanine 1213 to glycine 1259, valine 1352 to leucine 1425, and glutamine 1474 to glutamate 1509. The tract at residues arginine 1227 to glutamate 1252 is hinge. A compositionally biased stretch (polar residues) spans threonine 1231–leucine 1240. The alpha-helical tailpiece (LMM) stretch occupies residues glutamate 1253–threonine 1482. Residues glutamate 1253–glutamate 1509 are light meromyosin (LMM). Residues proline 1483–glutamate 1509 form a nonhelical tailpiece region. Positions serine 1484–glutamate 1509 are enriched in low complexity. Phosphoserine occurs at positions 1489, 1494, and 1499.

Belongs to the TRAFAC class myosin-kinesin ATPase superfamily. Myosin family. As to quaternary structure, myosin II heavy chain is two-headed. It self-assembles into filaments. Hexamer of 2 heavy chain subunits (MHC), 2 alkali light chain subunits (MLC) and 2 regulatory light chain subunits (MLC-2).

Its function is as follows. Myosin is a protein that binds to F-actin and has ATPase activity that is activated by F-actin. This chain is Myosin-2 heavy chain, non muscle, found in Acanthamoeba castellanii (Amoeba).